Here is a 168-residue protein sequence, read N- to C-terminus: Inorganic pyrophosphatase (168 aa).

Positions 23, 37, and 49 each coordinate substrate. Residues Asp59, Asp64, and Asp96 each coordinate Mg(2+). Tyr133 provides a ligand contact to substrate.

This sequence belongs to the PPase family. In terms of assembly, homohexamer. Mg(2+) serves as cofactor.

It localises to the cytoplasm. It catalyses the reaction diphosphate + H2O = 2 phosphate + H(+). Catalyzes the hydrolysis of inorganic pyrophosphate (PPi) forming two phosphate ions. The protein is Inorganic pyrophosphatase of Methanosarcina acetivorans (strain ATCC 35395 / DSM 2834 / JCM 12185 / C2A).